A 309-amino-acid polypeptide reads, in one-letter code: Ribonuclease Z (309 aa).

Residues His-63, His-65, Asp-67, His-68, His-141, Asp-212, and His-270 each contribute to the Zn(2+) site. Asp-67 (proton acceptor) is an active-site residue.

The protein belongs to the RNase Z family. In terms of assembly, homodimer. The cofactor is Zn(2+).

The catalysed reaction is Endonucleolytic cleavage of RNA, removing extra 3' nucleotides from tRNA precursor, generating 3' termini of tRNAs. A 3'-hydroxy group is left at the tRNA terminus and a 5'-phosphoryl group is left at the trailer molecule.. Zinc phosphodiesterase, which displays some tRNA 3'-processing endonuclease activity. Probably involved in tRNA maturation, by removing a 3'-trailer from precursor tRNA. This Lactobacillus delbrueckii subsp. bulgaricus (strain ATCC 11842 / DSM 20081 / BCRC 10696 / JCM 1002 / NBRC 13953 / NCIMB 11778 / NCTC 12712 / WDCM 00102 / Lb 14) protein is Ribonuclease Z.